The primary structure comprises 862 residues: AP-1 complex subunit gamma-2 (862 aa).

HEAT repeat units lie at residues 1–28 (MNPF…EERA), 29–65 (VVRK…LGYP), 101–136 (EVLM…CSAE), 137–173 (MARD…KVPD), 308–345 (GLRV…VDSQ), 346–382 (AVQR…ENNV), 384–417 (PLAK…KFAP), 418–454 (EKIW…NAPD), 458–496 (YTVR…NNAG), 507–545 (TESD…RFPS), and 560–599 (SFVL…ATFS). The GAE domain maps to 744-859 (AAYPSIVAFE…LEEGQINNFP (116 aa)).

Belongs to the adaptor complexes large subunit family. Adaptor protein complex 1 (AP-1) is a heterotetramer composed of two large adaptins (gamma-type subunit and beta-type subunit), a medium adaptin (mu-type subunit) and a small adaptin (sigma-type subunit).

The protein resides in the golgi apparatus. Its subcellular location is the cytoplasmic vesicle. It localises to the clathrin-coated vesicle membrane. Functionally, subunit of clathrin-associated adaptor protein complex 1 that plays a role in protein sorting at the trans-Golgi network and early endosomes (TGN/EE). The AP complexes mediate both the recruitment of clathrin to membranes and the recognition of sorting signals within the cytosolic tails of transmembrane cargo molecules. This is AP-1 complex subunit gamma-2 from Arabidopsis thaliana (Mouse-ear cress).